A 439-amino-acid polypeptide reads, in one-letter code: Tol-Pal system protein TolB (439 aa).

The signal sequence occupies residues 1 to 22 (MKKPLRWLAALTVLLLPLSALA).

The protein belongs to the TolB family. As to quaternary structure, the Tol-Pal system is composed of five core proteins: the inner membrane proteins TolA, TolQ and TolR, the periplasmic protein TolB and the outer membrane protein Pal. They form a network linking the inner and outer membranes and the peptidoglycan layer.

The protein resides in the periplasm. Part of the Tol-Pal system, which plays a role in outer membrane invagination during cell division and is important for maintaining outer membrane integrity. In Xanthomonas oryzae pv. oryzae (strain MAFF 311018), this protein is Tol-Pal system protein TolB.